The chain runs to 423 residues: UPF0229 protein PSPPH_0628 (423 aa).

The interval 65-110 (HHGRGGKQTVVHPGNKEFTTGEHIARPQGGGGGKGPGKAGNSGEGM) is disordered. The segment covering 92 to 107 (QGGGGGKGPGKAGNSG) has biased composition (gly residues).

The protein belongs to the UPF0229 family.

This is UPF0229 protein PSPPH_0628 from Pseudomonas savastanoi pv. phaseolicola (strain 1448A / Race 6) (Pseudomonas syringae pv. phaseolicola (strain 1448A / Race 6)).